The sequence spans 576 residues: SNF1-like protein kinase ssp2 (576 aa).

A Protein kinase domain is found at 34-285; the sequence is YIIRETLGEG…IQEIRRDPWF (252 aa). ATP-binding positions include 40–48 and Lys-63; that span reads LGEGSFGKV. Catalysis depends on Asp-156, which acts as the Proton acceptor. Thr-189 bears the Phosphothreonine mark. Positions 292-348 are auto-inhibitory domain (AID); sequence YLRPMEEVQGSYADSRIVSKLGEAMGFSEDYIVEALRSDENNEVKEAYNLLHENQVI. A UBA domain is found at 304–345; sequence ADSRIVSKLGEAMGFSEDYIVEALRSDENNEVKEAYNLLHEN. Ser-442 carries the post-translational modification Phosphoserine.

Belongs to the protein kinase superfamily. CAMK Ser/Thr protein kinase family. SNF1 subfamily. In terms of assembly, component of the AMP-activated protein kinase complex also known as the SNF1 kinase complex (Snf1c), a heterotrimeric complex composed of a catalytic subunit alpha and 2 regulatory subunits beta (amk2) and gamma (cbs2). Post-translationally, phosphorylation at Thr-189 by ssp1 is required for nuclear entry in nutritionally stressed cells.

The protein resides in the cytoplasm. The protein localises to the nucleus. It catalyses the reaction L-seryl-[protein] + ATP = O-phospho-L-seryl-[protein] + ADP + H(+). The catalysed reaction is L-threonyl-[protein] + ATP = O-phospho-L-threonyl-[protein] + ADP + H(+). Serine/threonine protein kinase essential for release from glucose repression via the phosphorylation of scr1 upon glucose deprivation. Catalytic subunit of the AMP-activated protein kinase complex also known as the SNF1 kinase complex (Snf1c), a central regulator of cellular energy homeostasis, which, in response to a fall in intracellular ATP levels, activates energy-producing pathways and inhibits energy-consuming processes. The complex phosphorylates histone H3 to form H3S10ph, which promotes H3K14ac formation, leading to transcriptional activation through TBP recruitment to the promoters. Regulates proper cell cycle exit and sexual differentiation. Also regulates ste11 levels under nitrogen deprivation. In Schizosaccharomyces pombe (strain 972 / ATCC 24843) (Fission yeast), this protein is SNF1-like protein kinase ssp2.